A 206-amino-acid chain; its full sequence is LexA repressor (206 aa).

Positions 28–48 (RAEIATRLGFKSANAAEEHLK) form a DNA-binding region, H-T-H motif. Residues Ser123 and Lys160 each act as for autocatalytic cleavage activity in the active site.

Belongs to the peptidase S24 family. As to quaternary structure, homodimer.

It carries out the reaction Hydrolysis of Ala-|-Gly bond in repressor LexA.. Functionally, represses a number of genes involved in the response to DNA damage (SOS response), including recA and lexA. In the presence of single-stranded DNA, RecA interacts with LexA causing an autocatalytic cleavage which disrupts the DNA-binding part of LexA, leading to derepression of the SOS regulon and eventually DNA repair. This chain is LexA repressor, found in Shewanella putrefaciens (strain CN-32 / ATCC BAA-453).